A 628-amino-acid polypeptide reads, in one-letter code: 1-deoxy-D-xylulose-5-phosphate synthase (628 aa).

Residues H72 and 113 to 115 each bind thiamine diphosphate; that span reads GHS. D144 is a Mg(2+) binding site. Thiamine diphosphate-binding positions include 145–146, N173, Y284, and E366; that span reads GA. Residue N173 coordinates Mg(2+).

Belongs to the transketolase family. DXPS subfamily. In terms of assembly, homodimer. The cofactor is Mg(2+). It depends on thiamine diphosphate as a cofactor.

It catalyses the reaction D-glyceraldehyde 3-phosphate + pyruvate + H(+) = 1-deoxy-D-xylulose 5-phosphate + CO2. Its pathway is metabolic intermediate biosynthesis; 1-deoxy-D-xylulose 5-phosphate biosynthesis; 1-deoxy-D-xylulose 5-phosphate from D-glyceraldehyde 3-phosphate and pyruvate: step 1/1. In terms of biological role, catalyzes the acyloin condensation reaction between C atoms 2 and 3 of pyruvate and glyceraldehyde 3-phosphate to yield 1-deoxy-D-xylulose-5-phosphate (DXP). In Shouchella clausii (strain KSM-K16) (Alkalihalobacillus clausii), this protein is 1-deoxy-D-xylulose-5-phosphate synthase.